Here is a 397-residue protein sequence, read N- to C-terminus: Acetyl-CoA acetyltransferase (397 aa).

Cysteine 95 functions as the Acyl-thioester intermediate in the catalytic mechanism. CoA-binding residues include tyrosine 187 and lysine 230. K(+) is bound at residue tyrosine 187. The K(+) site is built by alanine 246, glycine 247, and alanine 249. Serine 250 lines the CoA pocket. Valine 347 provides a ligand contact to K(+). Residues histidine 351 and cysteine 379 each act as proton acceptor in the active site.

This sequence belongs to the thiolase-like superfamily. Thiolase family.

It is found in the peroxisome. The enzyme catalyses 2 acetyl-CoA = acetoacetyl-CoA + CoA. Essential for n-decane utilization. The protein is Acetyl-CoA acetyltransferase (PAT1) of Yarrowia lipolytica (strain CLIB 122 / E 150) (Yeast).